The sequence spans 292 residues: MPKLSPRDIKSKIAGIKNTMRITNAMKVVSAAKLRKAQEAIFKARPYSDKLYELMAHLFAHIDTYSHPLFKRRELKNVDLVIISADRGLAGAFNTNLFKKVDSYLKSCPSQRINLHIVGKKANQYYSKRSYHIVSSYQDVFKKEINFDIVKELGAKLISRYKEEETDHIVLFNNEMITKATYAPKERRFLPITYEDVHIQEPKLDHNTIYNIEGNETDILDGIISIYMNYQLYRAMLESNAAEHFARMVAMDNATRNASDLIKKWTLIFNKARQESITAELIDIVTAAEAMD.

The protein belongs to the ATPase gamma chain family. As to quaternary structure, F-type ATPases have 2 components, CF(1) - the catalytic core - and CF(0) - the membrane proton channel. CF(1) has five subunits: alpha(3), beta(3), gamma(1), delta(1), epsilon(1). CF(0) has three main subunits: a, b and c.

The protein resides in the cell inner membrane. Functionally, produces ATP from ADP in the presence of a proton gradient across the membrane. The gamma chain is believed to be important in regulating ATPase activity and the flow of protons through the CF(0) complex. The chain is ATP synthase gamma chain from Hydrogenobaculum sp. (strain Y04AAS1).